A 406-amino-acid chain; its full sequence is MAAALQTNIRPVKFPATLRALTKQSSPAPFRVRCAAASPGKKRYNITLLPGDGIGPEVISIAKNVLQQAGSLEGLEFSFQEMPVGGAALDLVGVPLPEETVSAAKESDAVLLGAIGGYKWDKNEKHLKPETGLLQLRAGLKVFANLRPATVLPQLVDASTLKREVAEGVDLMVVRELTGGIYFGVPRGIKTNENGEEVGYNTEVYAAHEIDRIARVAFETARKRRGKLCSVDKANVLDASILWRRRVTALAAEYPDVELSHMYVDNAAMQLVRDPKQFDTIVTNNIFGDILSDEASMITGSIGMLPSASLSDSGPGLFEPIHGSAPDIAGQDKANPLATILSAAMLLKYGLGEEKAAKRIEDAVLGALNKGFRTGDIYSAGTKLVGCKEMGEEVLKSVDSHVQASV.

A chloroplast-targeting transit peptide spans 1–34 (MAAALQTNIRPVKFPATLRALTKQSSPAPFRVRC). The residue at position 71 (Ser71) is a Phosphoserine. 117–130 (GYKWDKNEKHLKPE) contributes to the NAD(+) binding site. 4 residues coordinate substrate: Arg137, Arg147, Arg175, and Asp265. Residues Asp265, Asp289, and Asp293 each contribute to the Mg(2+) site. 323-335 (GSAPDIAGQDKAN) is an NAD(+) binding site.

The protein belongs to the isocitrate and isopropylmalate dehydrogenases family. In terms of assembly, homodimer. Mg(2+) serves as cofactor. It depends on Mn(2+) as a cofactor.

It localises to the plastid. The protein resides in the chloroplast. The catalysed reaction is (2R,3S)-3-isopropylmalate + NAD(+) = 4-methyl-2-oxopentanoate + CO2 + NADH. It functions in the pathway amino-acid biosynthesis; L-leucine biosynthesis; L-leucine from 3-methyl-2-oxobutanoate: step 3/4. Its function is as follows. Catalyzes the oxidation of 3-carboxy-2-hydroxy-4-methylpentanoate (3-isopropylmalate) to 3-carboxy-4-methyl-2-oxopentanoate. The product decarboxylates to 4-methyl-2 oxopentanoate. This chain is 3-isopropylmalate dehydrogenase, chloroplastic, found in Brassica napus (Rape).